A 487-amino-acid polypeptide reads, in one-letter code: Putative beta-glucosidase 35 (487 aa).

Residues 1–27 (MGIRMGRRLLLITLLLGALLCNNVAYA) form the signal peptide. Gln48 contacts a beta-D-glucoside. Residues Asn76 and Asn116 are each glycosylated (N-linked (GlcNAc...) asparagine). Residues His151 and 200–201 (NE) contribute to the a beta-D-glucoside site. Glu201 functions as the Proton donor in the catalytic mechanism. Cys220 and Cys228 are oxidised to a cystine. Tyr344 contributes to the a beta-D-glucoside binding site. Asn369 is a glycosylation site (N-linked (GlcNAc...) asparagine). Glu414 serves as a coordination point for a beta-D-glucoside. Glu414 serves as the catalytic Nucleophile. N-linked (GlcNAc...) asparagine glycosylation is found at Asn418 and Asn419. Phe458 provides a ligand contact to a beta-D-glucoside.

This sequence belongs to the glycosyl hydrolase 1 family.

It catalyses the reaction Hydrolysis of terminal, non-reducing beta-D-glucosyl residues with release of beta-D-glucose.. This is Putative beta-glucosidase 35 (BGLU35) from Oryza sativa subsp. japonica (Rice).